The primary structure comprises 336 residues: Biotin synthase (336 aa).

Residues 48 to 277 (VFGDEVEFCS…QAELRLCGGR (230 aa)) form the Radical SAM core domain. [4Fe-4S] cluster contacts are provided by cysteine 66, cysteine 70, and cysteine 73. Residues cysteine 110, cysteine 142, cysteine 202, and arginine 272 each contribute to the [2Fe-2S] cluster site.

This sequence belongs to the radical SAM superfamily. Biotin synthase family. Homodimer. [4Fe-4S] cluster is required as a cofactor. Requires [2Fe-2S] cluster as cofactor.

It catalyses the reaction (4R,5S)-dethiobiotin + (sulfur carrier)-SH + 2 reduced [2Fe-2S]-[ferredoxin] + 2 S-adenosyl-L-methionine = (sulfur carrier)-H + biotin + 2 5'-deoxyadenosine + 2 L-methionine + 2 oxidized [2Fe-2S]-[ferredoxin]. The protein operates within cofactor biosynthesis; biotin biosynthesis; biotin from 7,8-diaminononanoate: step 2/2. Functionally, catalyzes the conversion of dethiobiotin (DTB) to biotin by the insertion of a sulfur atom into dethiobiotin via a radical-based mechanism. This Persephonella marina (strain DSM 14350 / EX-H1) protein is Biotin synthase.